Here is a 329-residue protein sequence, read N- to C-terminus: 4-hydroxythreonine-4-phosphate dehydrogenase (329 aa).

Substrate contacts are provided by histidine 136 and threonine 137. Histidine 166, histidine 211, and histidine 266 together coordinate a divalent metal cation. Residues lysine 274, asparagine 283, and arginine 292 each contribute to the substrate site.

It belongs to the PdxA family. In terms of assembly, homodimer. Zn(2+) serves as cofactor. Mg(2+) is required as a cofactor. It depends on Co(2+) as a cofactor.

Its subcellular location is the cytoplasm. The enzyme catalyses 4-(phosphooxy)-L-threonine + NAD(+) = 3-amino-2-oxopropyl phosphate + CO2 + NADH. It functions in the pathway cofactor biosynthesis; pyridoxine 5'-phosphate biosynthesis; pyridoxine 5'-phosphate from D-erythrose 4-phosphate: step 4/5. Its function is as follows. Catalyzes the NAD(P)-dependent oxidation of 4-(phosphooxy)-L-threonine (HTP) into 2-amino-3-oxo-4-(phosphooxy)butyric acid which spontaneously decarboxylates to form 3-amino-2-oxopropyl phosphate (AHAP). The sequence is that of 4-hydroxythreonine-4-phosphate dehydrogenase from Escherichia coli O81 (strain ED1a).